A 220-amino-acid polypeptide reads, in one-letter code: tRNA (guanine-N(7)-)-methyltransferase (220 aa).

4 residues coordinate S-adenosyl-L-methionine: E46, D71, D100, and D122. D122 is an active-site residue. Residues K126, D158, and 196 to 199 (TEYE) contribute to the substrate site.

It belongs to the class I-like SAM-binding methyltransferase superfamily. TrmB family.

The enzyme catalyses guanosine(46) in tRNA + S-adenosyl-L-methionine = N(7)-methylguanosine(46) in tRNA + S-adenosyl-L-homocysteine. It participates in tRNA modification; N(7)-methylguanine-tRNA biosynthesis. In terms of biological role, catalyzes the formation of N(7)-methylguanine at position 46 (m7G46) in tRNA. The sequence is that of tRNA (guanine-N(7)-)-methyltransferase from Malacoplasma penetrans (strain HF-2) (Mycoplasma penetrans).